The following is a 1093-amino-acid chain: Small G protein signaling modulator 1 (1093 aa).

The 155-residue stretch at 36-190 (HEDSSHIISF…EYTKMKTADH (155 aa)) folds into the RUN domain. Residues 256-297 (LLYGKNNVLVQPRDDMEAVPGYLSLHQTADVMTLKWTPNQLM) form an important for interaction with RAB9A and RAB9B region. Residues 301–350 (VGDLDYEKSVYWDYAVTIRLEEIVYLHCHQQVDSGGTVVLVSQDGIQRPP) are required for interaction with RAP family members. Disordered regions lie at residues 377–412 (DPPL…KEDD), 645–778 (DSTI…ELAV), and 810–838 (DGAV…EEPE). Residues 385 to 397 (GKGKVFPKLRKRS) show a composition bias toward basic residues. Residues 562-1026 (GVQPEIRRAV…SVWETIWAAK (465 aa)) form the Rab-GAP TBC domain. Residues 647-676 (TISNESSQSCSSGRQNLRLQSDSSSSTQVF) show a composition bias toward polar residues. A compositionally biased stretch (basic and acidic residues) spans 687–696 (AEGRSEEKHP). Residues 702-736 (NPANGTCSPDSGHPSSHNFSSGLSEHSEPSLSTED) are compositionally biased toward polar residues. 2 stretches are compositionally biased toward basic and acidic residues: residues 766 to 776 (TSRDEAPREEL) and 820 to 829 (EADKPSRADS).

This sequence belongs to the RUTBC family. As to quaternary structure, interacts with RAB9A (GTP-bound form) and RAB9B. Interacts with RAB3A, RAB4A, RAB5A, RAB8A, RAB11A, RAP1A, RAP1B, RAP2A and RAP2B. No interaction with RAB27A. In terms of tissue distribution, expressed only in brain.

The protein resides in the golgi apparatus. The protein localises to the trans-Golgi network. Its subcellular location is the cytoplasm. It is found in the cytoplasmic vesicle membrane. Its function is as follows. Interacts with numerous Rab family members, functioning as Rab effector for some, and as GTPase activator for others. Promotes GTP hydrolysis by RAB34 and RAB36. Probably functions as a GTPase effector with RAB9A and RAB9B; does not stimulate GTP hydrolysis with RAB9A and RAB9B. The protein is Small G protein signaling modulator 1 (Sgsm1) of Mus musculus (Mouse).